The following is a 596-amino-acid chain: Protein kinase C iota type (596 aa).

Over residues 1–12 (MPTQRDSSTMSH) the composition is skewed to polar residues. Residues 1–21 (MPTQRDSSTMSHTVACGGGGD) form a disordered region. The residue at position 2 (P2) is an N-acetylproline. Residues 2-28 (PTQRDSSTMSHTVACGGGGDHSHQVRV) form a required for interaction with RAB2 region. The tract at residues 2 to 253 (PTQRDSSTMS…KASSSLGLQD (252 aa)) is regulatory domain. T3 is subject to Phosphothreonine. Residues S7 and S8 each carry the phosphoserine modification. T9 is subject to Phosphothreonine. Residues 25-108 (QVRVKAYYRG…SELLIHVFPC (84 aa)) enclose the PB1 domain. Residues 72–91 (DEEGDPCTVSSQLELEEAFR) form an interaction with PARD6A region. Residues 125–134 (YRRGARRWRK) carry the Pseudosubstrate motif. The segment at 140–190 (GHTFQAKRFNRRAHCAICTDRIWGLGRQGYKCINCKLLVHKKCHKLVTIEC) adopts a Phorbol-ester/DAG-type zinc-finger fold. Positions 254 to 522 (FDLLRVIGRG…FADIQGHPFF (269 aa)) constitute a Protein kinase domain. ATP is bound at residue 260–268 (IGRGSYAKV). Phosphotyrosine; by SRC is present on residues Y265 and Y280. K283 serves as a coordination point for ATP. Y334 carries the post-translational modification Phosphotyrosine; by SRC. D378 acts as the Proton acceptor in catalysis. Phosphothreonine; by PDPK1 is present on T412. The region spanning 523-594 (RNVDWDMMEQ…INPLLMSAEE (72 aa)) is the AGC-kinase C-terminal domain. At T564 the chain carries Phosphothreonine.

Belongs to the protein kinase superfamily. AGC Ser/Thr protein kinase family. PKC subfamily. As to quaternary structure, forms a complex with SQSTM1 and MP2K5. Interacts directly with SQSTM1. Interacts with IKBKB. Interacts with PARD6A, PARD6B and PARD6G. Part of a quaternary complex containing aPKC, PARD3, a PARD6 protein (PARD6A, PARD6B or PARD6G) and a GTPase protein (CDC42 or RAC1). Part of a complex with LLGL1 and PARD6B. Interacts with ADAP1/CENTA1. Interaction with SMG1, through the ZN-finger domain, activates the kinase activity. Interacts with CDK7. Forms a complex with RAB2A and GAPDH involved in recruitment onto the membrane of vesicular tubular clusters (VTCs). Interacts with ECT2 ('Thr-359' phosphorylated form). Interacts with VAMP2. Interacts with WDFY2 (via WD repeats 1-3). Post-translationally, phosphorylation at Thr-412 in the activation loop is not mandatory for activation. Upon neuronal growth factor (NGF) stimulation, phosphorylated by SRC at Tyr-265, Tyr-280 and Tyr-334. Phosphorylation at Tyr-265 facilitates binding to KPNB1/importin-beta regulating entry of PRKCI into the nucleus. Phosphorylation on Tyr-334 is important for NF-kappa-B stimulation. Phosphorylated at Thr-564 during the initial phase of long term potentiation. As to expression, expressed in dorsal hippocampus (at protein level).

It is found in the cytoplasm. The protein localises to the membrane. It localises to the endosome. The protein resides in the nucleus. It catalyses the reaction L-seryl-[protein] + ATP = O-phospho-L-seryl-[protein] + ADP + H(+). It carries out the reaction L-threonyl-[protein] + ATP = O-phospho-L-threonyl-[protein] + ADP + H(+). With respect to regulation, atypical PKCs (PRKCI and PRKCZ) exhibit an elevated basal enzymatic activity (that may be due to the interaction with SMG1 or SQSTM1) and are not regulated by diacylglycerol, phosphatidylserine, phorbol esters or calcium ions. Two specific sites, Thr-412 (activation loop of the kinase domain) and Thr-564 (turn motif), need to be phosphorylated for its full activation. Might also be a target for novel lipid activators that are elevated during nutrient-stimulated insulin secretion. Its function is as follows. Calcium- and diacylglycerol-independent serine/ threonine-protein kinase that plays a general protective role against apoptotic stimuli, is involved in NF-kappa-B activation, cell survival, differentiation and polarity, and contributes to the regulation of microtubule dynamics in the early secretory pathway. Is necessary for BCR-ABL oncogene-mediated resistance to apoptotic drug in leukemia cells, protecting leukemia cells against drug-induced apoptosis. In cultured neurons, prevents amyloid beta protein-induced apoptosis by interrupting cell death process at a very early step. In glioblastoma cells, may function downstream of phosphatidylinositol 3-kinase (PI3K) and PDPK1 in the promotion of cell survival by phosphorylating and inhibiting the pro-apoptotic factor BAD. Can form a protein complex in non-small cell lung cancer (NSCLC) cells with PARD6A and ECT2 and regulate ECT2 oncogenic activity by phosphorylation, which in turn promotes transformed growth and invasion. In response to nerve growth factor (NGF), acts downstream of SRC to phosphorylate and activate IRAK1, allowing the subsequent activation of NF-kappa-B and neuronal cell survival. Functions in the organization of the apical domain in epithelial cells by phosphorylating EZR. This step is crucial for activation and normal distribution of EZR at the early stages of intestinal epithelial cell differentiation. Forms a protein complex with LLGL1 and PARD6B independently of PARD3 to regulate epithelial cell polarity. Plays a role in microtubule dynamics in the early secretory pathway through interaction with RAB2A and GAPDH and recruitment to vesicular tubular clusters (VTCs). In human coronary artery endothelial cells (HCAEC), is activated by saturated fatty acids and mediates lipid-induced apoptosis. Downstream of PI3K is required for insulin-stimulated glucose transport. Activates RAB4A and promotes its association with KIF3A which is required for the insulin-induced SLC2A4/GLUT4 translocation in adipocytes. Is essential in early embryogenesis and development of differentiating photoreceptors by playing a role in the establishment of epithelial and neuronal polarity. Involved in early synaptic long term potentiation phase in CA1 hippocampal cells and short term memory formation. The protein is Protein kinase C iota type (Prkci) of Rattus norvegicus (Rat).